We begin with the raw amino-acid sequence, 576 residues long: Alpha-1,3-arabinosyltransferase XAT3 (576 aa).

Residues 1-19 (MKAGERPKLVRGVRQESRR) are Cytoplasmic-facing. A helical; Signal-anchor for type II membrane protein membrane pass occupies residues 20–40 (FRLLVIVVGFFLVSLTFVFVS). The Lumenal segment spans residues 41 to 576 (KPDAILFSLN…LLEALDNLNP (536 aa)). The segment at 64-171 (IQQKVNEPSG…KHKVTLPTVS (108 aa)) is disordered. Composition is skewed to basic and acidic residues over residues 73 to 98 (GESRKTSTDALRGDPKVVDDEADAKP), 126 to 138 (THNKDGNGHKSHQ), and 147 to 163 (GESKGNDEEGEHAEQKH). Residues Asn-172, Asn-375, and Asn-443 are each glycosylated (N-linked (GlcNAc...) asparagine).

It belongs to the glycosyltransferase 61 family.

The protein localises to the golgi apparatus membrane. It functions in the pathway glycan metabolism. In terms of biological role, glycosyltransferase involved in the arabinosylation of xylan, the major hemicellulose (non-cellulosic component) of primary and secondary walls of angiosperms. Possesses alpha-1,3-arabinosyltransferase activity, transferring an arabinofuranose residue to the xylan backbone. The protein is Alpha-1,3-arabinosyltransferase XAT3 of Oryza sativa subsp. japonica (Rice).